A 129-amino-acid polypeptide reads, in one-letter code: Iron-sulfur cluster assembly 1 homolog, mitochondrial (129 aa).

The N-terminal 12 residues, 1-12 (MSASLVRATVRA), are a transit peptide targeting the mitochondrion. Residues C57, C121, and C123 each coordinate Fe cation.

This sequence belongs to the HesB/IscA family. Interacts with CRY2, but not with CRY1 (in vitro).

It is found in the mitochondrion. Its function is as follows. Involved in the maturation of mitochondrial 4Fe-4S proteins functioning late in the iron-sulfur cluster assembly pathway. Probably involved in the binding of an intermediate of Fe/S cluster assembly. The protein is Iron-sulfur cluster assembly 1 homolog, mitochondrial (ISCA1) of Bos taurus (Bovine).